The primary structure comprises 104 residues: Integration host factor subunit alpha (104 aa).

The protein belongs to the bacterial histone-like protein family. As to quaternary structure, heterodimer of an alpha and a beta chain.

Its function is as follows. This protein is one of the two subunits of integration host factor, a specific DNA-binding protein that functions in genetic recombination as well as in transcriptional and translational control. This is Integration host factor subunit alpha from Methylobacterium sp. (strain 4-46).